We begin with the raw amino-acid sequence, 303 residues long: Glutathione transport system permease protein GsiD (303 aa).

6 helical membrane-spanning segments follow: residues 40 to 60 (AMTA…ARWI), 105 to 125 (LAAG…LGLL), 144 to 164 (LFAF…GSGI), 165 to 185 (ANVI…LVRG), 222 to 242 (IVVF…SLSF), and 266 to 286 (VIAP…VLAF). Residues 101–290 (AQISLAAGVF…LTVLAFNLLG (190 aa)) form the ABC transmembrane type-1 domain.

This sequence belongs to the binding-protein-dependent transport system permease family. In terms of assembly, the complex is composed of two ATP-binding proteins (GsiA), two transmembrane proteins (GsiC and GsiD) and a solute-binding protein (GsiB).

It is found in the cell inner membrane. Functionally, part of the ABC transporter complex GsiABCD involved in glutathione import. Probably responsible for the translocation of the substrate across the membrane. This is Glutathione transport system permease protein GsiD from Shigella dysenteriae serotype 1 (strain Sd197).